A 189-amino-acid polypeptide reads, in one-letter code: Elongation factor P (189 aa).

The protein belongs to the elongation factor P family.

It localises to the cytoplasm. The protein operates within protein biosynthesis; polypeptide chain elongation. Involved in peptide bond synthesis. Stimulates efficient translation and peptide-bond synthesis on native or reconstituted 70S ribosomes in vitro. Probably functions indirectly by altering the affinity of the ribosome for aminoacyl-tRNA, thus increasing their reactivity as acceptors for peptidyl transferase. This is Elongation factor P from Campylobacter lari (strain RM2100 / D67 / ATCC BAA-1060).